The following is a 329-amino-acid chain: Acetyl-coenzyme A carboxylase carboxyl transferase subunit alpha (329 aa).

Positions 40–294 constitute a CoA carboxyltransferase C-terminal domain; sequence QLETLAARRR…REAIERHLDE (255 aa).

Belongs to the AccA family. Acetyl-CoA carboxylase is a heterohexamer composed of biotin carboxyl carrier protein (AccB), biotin carboxylase (AccC) and two subunits each of ACCase subunit alpha (AccA) and ACCase subunit beta (AccD).

It localises to the cytoplasm. It catalyses the reaction N(6)-carboxybiotinyl-L-lysyl-[protein] + acetyl-CoA = N(6)-biotinyl-L-lysyl-[protein] + malonyl-CoA. The protein operates within lipid metabolism; malonyl-CoA biosynthesis; malonyl-CoA from acetyl-CoA: step 1/1. In terms of biological role, component of the acetyl coenzyme A carboxylase (ACC) complex. First, biotin carboxylase catalyzes the carboxylation of biotin on its carrier protein (BCCP) and then the CO(2) group is transferred by the carboxyltransferase to acetyl-CoA to form malonyl-CoA. The sequence is that of Acetyl-coenzyme A carboxylase carboxyl transferase subunit alpha from Prochlorococcus marinus (strain MIT 9313).